The primary structure comprises 128 residues: 14.7 kDa protein (128 aa).

Residues C65 to H94 form a C4-type zinc finger.

In terms of biological role, may act as a regulatory factor during viral transcription. This is 14.7 kDa protein from Shallot virus X (ShVX).